The chain runs to 255 residues: Pimeloyl-[acyl-carrier protein] methyl ester esterase (255 aa).

Residues tryptophan 18, 78–79 (SL), and 139–143 (FLALD) each bind substrate. Serine 78 acts as the Nucleophile in catalysis. Residues aspartate 203 and histidine 233 contribute to the active site. Histidine 233 lines the substrate pocket.

It belongs to the AB hydrolase superfamily. Carboxylesterase BioH family. In terms of assembly, monomer.

The protein localises to the cytoplasm. The catalysed reaction is 6-carboxyhexanoyl-[ACP] methyl ester + H2O = 6-carboxyhexanoyl-[ACP] + methanol + H(+). The protein operates within cofactor biosynthesis; biotin biosynthesis. The physiological role of BioH is to remove the methyl group introduced by BioC when the pimeloyl moiety is complete. It allows to synthesize pimeloyl-ACP via the fatty acid synthetic pathway through the hydrolysis of the ester bonds of pimeloyl-ACP esters. The polypeptide is Pimeloyl-[acyl-carrier protein] methyl ester esterase (Xylella fastidiosa (strain M23)).